The sequence spans 128 residues: Probable heavy metal-dependent transcriptional regulator HI_0293 (128 aa).

Residues 1 to 69 (MNISEAAKLV…LHQIAQLLAL (69 aa)) form the HTH merR-type domain. A DNA-binding region (H-T-H motif) is located at residues 4 to 23 (SEAAKLVGLSTKQIRDYEKM).

Its subcellular location is the cytoplasm. Could be a copper-dependent transcriptional activator of the ATPase HI_0290. The polypeptide is Probable heavy metal-dependent transcriptional regulator HI_0293 (Haemophilus influenzae (strain ATCC 51907 / DSM 11121 / KW20 / Rd)).